Consider the following 218-residue polypeptide: Adenylate kinase (218 aa).

14 to 19 (GAGKGT) provides a ligand contact to ATP. Residues 34 to 63 (STGDMFRAAIKAGTELGKQAKALMDEGKLV) form an NMP region. Residues Thr-35, Arg-40, 61–63 (KLV), 89–92 (GFPR), and Gln-96 contribute to the AMP site. The segment at 126 to 163 (GRRVHQASGRSYHIVYNPPKVEGKDDVTGEDLIIRADD) is LID. ATP is bound by residues Arg-127 and 136–137 (SY). The AMP site is built by Arg-160 and Arg-171. Lys-204 contacts ATP.

Belongs to the adenylate kinase family. As to quaternary structure, monomer.

It localises to the cytoplasm. The catalysed reaction is AMP + ATP = 2 ADP. Its pathway is purine metabolism; AMP biosynthesis via salvage pathway; AMP from ADP: step 1/1. Catalyzes the reversible transfer of the terminal phosphate group between ATP and AMP. Plays an important role in cellular energy homeostasis and in adenine nucleotide metabolism. The protein is Adenylate kinase of Mannheimia succiniciproducens (strain KCTC 0769BP / MBEL55E).